The following is a 100-amino-acid chain: Small ribosomal subunit protein uS14c (100 aa).

The protein belongs to the universal ribosomal protein uS14 family. In terms of assembly, part of the 30S ribosomal subunit.

It is found in the plastid. The protein localises to the chloroplast. Binds 16S rRNA, required for the assembly of 30S particles. The sequence is that of Small ribosomal subunit protein uS14c from Adiantum capillus-veneris (Maidenhair fern).